The sequence spans 381 residues: 4-hydroxy-3-methylbut-2-en-1-yl diphosphate synthase (flavodoxin) (381 aa).

4 residues coordinate [4Fe-4S] cluster: cysteine 273, cysteine 276, cysteine 308, and glutamate 315.

It belongs to the IspG family. It depends on [4Fe-4S] cluster as a cofactor.

It catalyses the reaction (2E)-4-hydroxy-3-methylbut-2-enyl diphosphate + oxidized [flavodoxin] + H2O + 2 H(+) = 2-C-methyl-D-erythritol 2,4-cyclic diphosphate + reduced [flavodoxin]. It participates in isoprenoid biosynthesis; isopentenyl diphosphate biosynthesis via DXP pathway; isopentenyl diphosphate from 1-deoxy-D-xylulose 5-phosphate: step 5/6. Its function is as follows. Converts 2C-methyl-D-erythritol 2,4-cyclodiphosphate (ME-2,4cPP) into 1-hydroxy-2-methyl-2-(E)-butenyl 4-diphosphate. The polypeptide is 4-hydroxy-3-methylbut-2-en-1-yl diphosphate synthase (flavodoxin) (Gluconobacter oxydans (strain 621H) (Gluconobacter suboxydans)).